Here is a 465-residue protein sequence, read N- to C-terminus: Lipase 10 (465 aa).

Positions 1–16 (MKTLLIFLAFLSSIFA) are cleaved as a signal peptide. Cysteines 112 and 285 form a disulfide. Residue serine 196 is the Charge relay system of the active site. Asparagine 231 and asparagine 319 each carry an N-linked (GlcNAc...) asparagine glycan. Residues aspartate 348 and histidine 381 each act as charge relay system in the active site. Cysteine 364 and cysteine 409 are joined by a disulfide.

It belongs to the AB hydrolase superfamily. Lipase family. Class Lip subfamily.

It is found in the secreted. It carries out the reaction a triacylglycerol + H2O = a diacylglycerol + a fatty acid + H(+). In terms of biological role, secreted lipase that is able to hydrolyze both the neutral triacylglycerols and the monopalmitate ester Tween 40, allowing the use of hydrolyzed products as carbon sources. Has broad lipolytic activity, which may be important for colonization and subsequent infection, therefore contributing to the persistence and virulence in human tissue. This Candida albicans (strain SC5314 / ATCC MYA-2876) (Yeast) protein is Lipase 10.